Reading from the N-terminus, the 335-residue chain is Glyceraldehyde-3-phosphate dehydrogenase (335 aa).

NAD(+) contacts are provided by residues 12 to 13 (RI), Asp34, Arg78, and Ser120. D-glyceraldehyde 3-phosphate contacts are provided by residues 151–153 (SCT) and Thr182. Residue Cys152 is the Nucleophile of the active site. Residue Asn183 participates in NAD(+) binding. D-glyceraldehyde 3-phosphate is bound by residues Arg197, 210–211 (TG), and Arg233. NAD(+) is bound at residue Asn315.

This sequence belongs to the glyceraldehyde-3-phosphate dehydrogenase family. As to quaternary structure, homotetramer.

It is found in the cytoplasm. The catalysed reaction is D-glyceraldehyde 3-phosphate + phosphate + NAD(+) = (2R)-3-phospho-glyceroyl phosphate + NADH + H(+). Its pathway is carbohydrate degradation; glycolysis; pyruvate from D-glyceraldehyde 3-phosphate: step 1/5. Functionally, catalyzes the oxidative phosphorylation of glyceraldehyde 3-phosphate (G3P) to 1,3-bisphosphoglycerate (BPG) using the cofactor NAD. The first reaction step involves the formation of a hemiacetal intermediate between G3P and a cysteine residue, and this hemiacetal intermediate is then oxidized to a thioester, with concomitant reduction of NAD to NADH. The reduced NADH is then exchanged with the second NAD, and the thioester is attacked by a nucleophilic inorganic phosphate to produce BPG. This is Glyceraldehyde-3-phosphate dehydrogenase (gap) from Geobacillus stearothermophilus (Bacillus stearothermophilus).